The primary structure comprises 1262 residues: Clustered mitochondria protein homolog (1262 aa).

Residues 1–47 (MTSGSELKAEVDAPVVNGKDELVHEEDNNDSGHSSINTPDASEDKQT) form a disordered region. Over residues 31 to 40 (SGHSSINTPD) the composition is skewed to polar residues. Residues 335 to 580 (AIELIEPFRV…RSMPPDVHYL (246 aa)) form the Clu domain.

It belongs to the CLU family.

It is found in the cytoplasm. Functionally, mRNA-binding protein involved in proper cytoplasmic distribution of mitochondria. This chain is Clustered mitochondria protein homolog, found in Caenorhabditis briggsae.